The primary structure comprises 837 residues: MLGVLKKVFDPNKRQLARLEKIADQVDALGPEMARLSDEQLRQKTEEFKARYQQGESLDDLLVEAFAVVREGAKRVLGLYPYKVQIMGGVVLHEGDIAEMKTGEGKTLTATMPVYLNALTGRGVHVVTVNEYLASRDAKEMGQLYEFLGLTVGLNLSGMSREEKQAAYNADITYGTNNEFGFDYLRDNMVLYKEHIVQRPLYFAVVDEVDSILIDEARTPLIISGTAQKSTKLYVQANAFVRTLRKDVDYTYDEKSKSVQLTEEGMNKAERAFGIDNLFDLKHVTLNHHIQLALRAHVTMQRDVDYVVQDGKVIIVDPFTGRLMHGRRYSDGLHQAIEAKEGLEIQNESMTLATITFQNYFRMYEKLAGMTGTAKTEEEEFRNIYNMRVVVIPTNRPVIREDRPDLIYRTMEGKFRAVVEDIAQRHAKGQPVLVGTVAIETSELLSEMLKKRGIPHNVLNAKNHAKEAEIIAQAGQKGAVTIATNMAGRGTDIKLGEGVKELGGLAVIGTERHESRRIDNQLRGRSGRQGDPGVSQFYLSLEDELMRRFGSESLMAMMDRLGMDDSQPIQSKMVTRAVESAQKRVEGNNFDARKQLLQYDDVLREQREVIYRQRFEVLDADNLRGIIEKMIRSVIERVVNTYTPKEDLPEEWNLKGVVDYLNAYLLPEGDVTEGDLRGKEPEEMIELIWAKVKARYDEKETQIPPEQMREFERVVVLRAVDMKWMNHIDAMEQLRQGIHLRAYGQVDPLREYQMEGYAMFENMIAAIEEEVATYIMKAEIHHNLERQEVAKGEAVHPKEDGEEPKKKPIRKAVRVGRNDPCPCGSGKKYKHCCGRAV.

ATP-binding positions include glutamine 85, 103 to 107, and aspartate 492; that span reads GEGKT. Basic and acidic residues predominate over residues 787-806; sequence QEVAKGEAVHPKEDGEEPKK. The disordered stretch occupies residues 787–813; it reads QEVAKGEAVHPKEDGEEPKKKPIRKAV. Zn(2+) is bound by residues cysteine 821, cysteine 823, cysteine 832, and cysteine 833.

The protein belongs to the SecA family. In terms of assembly, monomer and homodimer. Part of the essential Sec protein translocation apparatus which comprises SecA, SecYEG and auxiliary proteins SecDF. Other proteins may also be involved. Requires Zn(2+) as cofactor.

It is found in the cell membrane. The protein resides in the cytoplasm. It catalyses the reaction ATP + H2O + cellular proteinSide 1 = ADP + phosphate + cellular proteinSide 2.. Functionally, part of the Sec protein translocase complex. Interacts with the SecYEG preprotein conducting channel. Has a central role in coupling the hydrolysis of ATP to the transfer of proteins into and across the cell membrane, serving as an ATP-driven molecular motor driving the stepwise translocation of polypeptide chains across the membrane. This chain is Protein translocase subunit SecA 1, found in Geobacillus thermodenitrificans (strain NG80-2).